We begin with the raw amino-acid sequence, 320 residues long: ATP-dependent 6-phosphofructokinase (320 aa).

ATP is bound at residue Gly12. ADP contacts are provided by residues Arg22 to Arg26 and Arg55 to Asp60. ATP contacts are provided by residues Arg73–Phe74 and Gly103–Ser106. Residue Asp104 participates in Mg(2+) binding. Thr126–Asp128 lines the substrate pocket. The Proton acceptor role is filled by Asp128. Arg155 serves as a coordination point for ADP. Substrate contacts are provided by residues Arg163 and Met170–Arg172. ADP contacts are provided by residues Gly186–Glu188, Lys212, and Lys214–His216. Substrate is bound by residues Glu223, Arg244, and His250–Arg253.

The protein belongs to the phosphofructokinase type A (PFKA) family. ATP-dependent PFK group I subfamily. Prokaryotic clade 'B1' sub-subfamily. In terms of assembly, homotetramer. It depends on Mg(2+) as a cofactor.

The protein resides in the cytoplasm. The catalysed reaction is beta-D-fructose 6-phosphate + ATP = beta-D-fructose 1,6-bisphosphate + ADP + H(+). Its pathway is carbohydrate degradation; glycolysis; D-glyceraldehyde 3-phosphate and glycerone phosphate from D-glucose: step 3/4. Allosterically activated by ADP and other diphosphonucleosides, and allosterically inhibited by phosphoenolpyruvate. Its function is as follows. Catalyzes the phosphorylation of D-fructose 6-phosphate to fructose 1,6-bisphosphate by ATP, the first committing step of glycolysis. In Erwinia tasmaniensis (strain DSM 17950 / CFBP 7177 / CIP 109463 / NCPPB 4357 / Et1/99), this protein is ATP-dependent 6-phosphofructokinase.